We begin with the raw amino-acid sequence, 175 residues long: Large ribosomal subunit protein uL10 (175 aa).

The protein belongs to the universal ribosomal protein uL10 family. In terms of assembly, part of the ribosomal stalk of the 50S ribosomal subunit. The N-terminus interacts with L11 and the large rRNA to form the base of the stalk. The C-terminus forms an elongated spine to which L12 dimers bind in a sequential fashion forming a multimeric L10(L12)X complex.

Its function is as follows. Forms part of the ribosomal stalk, playing a central role in the interaction of the ribosome with GTP-bound translation factors. In Prochlorococcus marinus (strain NATL1A), this protein is Large ribosomal subunit protein uL10.